Consider the following 840-residue polypeptide: MMSIQEKSKENSSKVTKKSDDKNSETEIQDSQKNLAKKSGPKETIKSQAKSSSESKINQPELETRMSTRSSKAASNDKATKSINKNTVTVRGYSQESTKKKLSQKKLVHENPKANEQLNRRSQRLQQLTEVSRRSLRSREIQGQVQAVKQSLPPTKKEQCSSTQSKSNKTSQKHVKRKVLEVKSDSKEDENLVINEVINSPKGKKRKVEHQTACACSSQCTQGSEKCPQKTTRRDETKPVPVTSEVKRSKMATSVVPKKNEMKKSVHTQVNTNTTLPKSPQPSVPEQSDNELEQAGKSKRGSILQLCEEIAGEIESDNVEVKKESSQMESVKEEKPTEIKLEETSVERQILHQKETNQDVQCNRFFPSRKTKPVKCILNGINSSAKKNSNWTKIKLSKFNSVQHNKLDSQVSPKLGLLRTSFSPPALEMHHPVTQSTFLGTKLHDRNITCQQEKMKEINSEEVKINDITVEINKTTERAPENCHLANEIKPSDPPLDNQMKHSFDSASNKNFSQCLESKLENSPVENVTAASTLLSQAKIDTGENKFPGSAPQQHSILSNQTSKSSDNRETPRNHSLPKCNSHLEITIPKDLKLKEAEKTDEKQLIIDAGQKRFGAVSCNVCGMLYTASNPEDETQHLLFHNQFISAVKYVGWKKERILAEYPDGRIIMVLPEDPKYALKKVDEIREMVDNDLGFQQAPLMCYSRTKTLLFISNDKKVVGCLIAEHIQWGYRVIEEKLPVIRSEEEKVRFERQKAWCCSTLPEPAICGISRIWVFSMMRRKKIASRMIECLRSNFIYGSYLSKEEIAFSDPTPDGKLFATQYCGTGQFLVYNFINGQNST.

Residues 1–25 (MMSIQEKSKENSSKVTKKSDDKNSE) are compositionally biased toward basic and acidic residues. The segment at 1–188 (MMSIQEKSKE…VLEVKSDSKE (188 aa)) is disordered. Polar residues-rich tracts occupy residues 46-58 (KSQA…SKIN), 65-74 (RMSTRSSKAA), and 81-96 (KSIN…YSQE). Basic and acidic residues predominate over residues 131–140 (VSRRSLRSRE). Polar residues predominate over residues 141-153 (IQGQVQAVKQSLP). Over residues 161–170 (SSTQSKSNKT) the composition is skewed to low complexity. The segment covering 178–188 (KVLEVKSDSKE) has biased composition (basic and acidic residues). Ser200 is modified (phosphoserine). 2 disordered regions span residues 221-300 (TQGS…KSKR) and 318-338 (NVEV…KPTE). The span at 267-278 (HTQVNTNTTLPK) shows a compositional bias: polar residues. A compositionally biased stretch (basic and acidic residues) spans 319 to 338 (VEVKKESSQMESVKEEKPTE). Residue Lys332 forms a Glycyl lysine isopeptide (Lys-Gly) (interchain with G-Cter in SUMO2) linkage. Phosphoserine is present on Ser412. Disordered stretches follow at residues 486 to 505 (ANEI…HSFD) and 542 to 582 (TGEN…KCNS). A compositionally biased stretch (polar residues) spans 551–565 (APQQHSILSNQTSKS). A CCHH-type zinc finger spans residues 617–641 (VSCNVCGMLYTASNPEDETQHLLFH). Acetyl-CoA is bound by residues 772–774 (IWV), 780–785 (RKKIAS), and 812–814 (TPD).

It belongs to the acetyltransferase family. ECO subfamily. In terms of assembly, the subunit structure is controversial. Monomer. Homodimer. Post-translationally, phosphorylated during mitosis, when associated with chromosomes. In terms of tissue distribution, widely expressed. Expressed in heart, brain, liver, placenta, lung, kidney and pancreas. Highly expressed in muscle.

The protein resides in the nucleus. It is found in the chromosome. It carries out the reaction L-lysyl-[protein] + acetyl-CoA = N(6)-acetyl-L-lysyl-[protein] + CoA + H(+). Acetyltransferase required for the establishment of sister chromatid cohesion. Couples the processes of cohesion and DNA replication to ensure that only sister chromatids become paired together. In contrast to the structural cohesins, the deposition and establishment factors are required only during S phase. Acts by mediating the acetylation of cohesin component SMC3. The sequence is that of N-acetyltransferase ESCO1 (ESCO1) from Homo sapiens (Human).